Here is a 384-residue protein sequence, read N- to C-terminus: DNA replication and repair protein RecF (384 aa).

43 to 50 (GENGSGKT) lines the ATP pocket.

It belongs to the RecF family.

It is found in the cytoplasm. The RecF protein is involved in DNA metabolism; it is required for DNA replication and normal SOS inducibility. RecF binds preferentially to single-stranded, linear DNA. It also seems to bind ATP. The chain is DNA replication and repair protein RecF from Brucella abortus (strain 2308).